The following is a 599-amino-acid chain: MKNIRNFSIIAHIDHGKSTLSDRLIQTCGGLSDREMEAQVLDSMDLERERGITIKAQSVTLNYKAKNGETYQLNFIDTPGHVDFSYEVSRSLAACEGALLVVDAGQGVEAQTLANCYTAIEMNLEVVPILNKIDLPAADPERVAEEIEDIVGIDAMEAVRCSAKTGVGIEDVLEEIVAKIPAPKGDPNAPLQALIIDSWFDNYLGVVSLVRVKNGVLRKGDKIKVMSTGQTYNVDRLGIFTPKQVDKNELECGEVGWVVCAIKDILGAPVGDTLTSQHNPASSVLPGFKKVKPQVYAGLFPVSSDDYEAFRDALGKLSLNDASLFYEPETSTALGFGFRCGFLGLLHMEIIQERLEREYDLDLITTAPTVVYEVELTNGDVIYVDSPSKLPPLNNISEIREPIAECNMLVPQEYLGNVITLCVEKRGVQTNMVYHGNQIALTYEIPMGEVVLDFFDRLKSTSRGYASLDYSFKRFQAADMVRVDIMINGERVDALALIVHKDNAPYRGRELVEKMKELIPRQQFDIAIQAAIGNHIIARSTVKQLRKNVLAKCYGGDVSRKKKLLQKQKEGKKRMKQLGNVEVPQEAFLAILHVGKDSK.

Positions Lys2–Lys184 constitute a tr-type G domain. Residues Asp14–Thr19 and Asn131–Asp134 contribute to the GTP site.

Belongs to the TRAFAC class translation factor GTPase superfamily. Classic translation factor GTPase family. LepA subfamily.

It is found in the cell inner membrane. It carries out the reaction GTP + H2O = GDP + phosphate + H(+). Required for accurate and efficient protein synthesis under certain stress conditions. May act as a fidelity factor of the translation reaction, by catalyzing a one-codon backward translocation of tRNAs on improperly translocated ribosomes. Back-translocation proceeds from a post-translocation (POST) complex to a pre-translocation (PRE) complex, thus giving elongation factor G a second chance to translocate the tRNAs correctly. Binds to ribosomes in a GTP-dependent manner. This Mannheimia succiniciproducens (strain KCTC 0769BP / MBEL55E) protein is Elongation factor 4.